Here is a 134-residue protein sequence, read N- to C-terminus: UPF0719 transmembrane protein YshE (134 aa).

4 helical membrane passes run 10 to 30, 48 to 68, 78 to 98, and 114 to 134; these read VEIA…LTVF, AVAM…QHSI, IGWG…FEFL, and AVGF…AAGI.

Belongs to the UPF0719 family.

The protein resides in the cell membrane. The polypeptide is UPF0719 transmembrane protein YshE (yshE) (Bacillus subtilis (strain 168)).